The chain runs to 100 residues: Urease subunit gamma (100 aa).

This sequence belongs to the urease gamma subunit family. As to quaternary structure, heterotrimer of UreA (gamma), UreB (beta) and UreC (alpha) subunits. Three heterotrimers associate to form the active enzyme.

It is found in the cytoplasm. The enzyme catalyses urea + 2 H2O + H(+) = hydrogencarbonate + 2 NH4(+). The protein operates within nitrogen metabolism; urea degradation; CO(2) and NH(3) from urea (urease route): step 1/1. The protein is Urease subunit gamma of Acetivibrio thermocellus (strain ATCC 27405 / DSM 1237 / JCM 9322 / NBRC 103400 / NCIMB 10682 / NRRL B-4536 / VPI 7372) (Clostridium thermocellum).